Reading from the N-terminus, the 330-residue chain is MYTEINEMLTPKVLKVQAESPYKARIVLEPLERGFGHTLGNALRRILLSSMPGSAITEASIDGVLHEYSTIEGVQEDVVDLLLNLKSVAIKLTVGNEAQITLNKEGPCQVTAGDIQLTHGQEIINPELVIANLNEKGKLNMTLKVERGIGFHNTDAFVRYHDDEIEKKTVGKLKIDNSFSPVKKVAYFVDSARVENRTDLDKLTIELETNGTIDAEEAIRISASILQRQLHAFVDMKFEESRADNKERNDFDPVLLRSVDDLELTVRSANCLKAENIHYIGDLVQRTESELLKTPNLGKKSLTEIKDVLASRSLSLGMKLENWPPASLGE.

Residues 1–237 (MYTEINEMLT…RQLHAFVDMK (237 aa)) form an alpha N-terminal domain (alpha-NTD) region. Residues 251-330 (FDPVLLRSVD…ENWPPASLGE (80 aa)) are alpha C-terminal domain (alpha-CTD).

The protein belongs to the RNA polymerase alpha chain family. As to quaternary structure, homodimer. The RNAP catalytic core consists of 2 alpha, 1 beta, 1 beta' and 1 omega subunit. When a sigma factor is associated with the core the holoenzyme is formed, which can initiate transcription.

It carries out the reaction RNA(n) + a ribonucleoside 5'-triphosphate = RNA(n+1) + diphosphate. In terms of biological role, DNA-dependent RNA polymerase catalyzes the transcription of DNA into RNA using the four ribonucleoside triphosphates as substrates. This Legionella pneumophila subsp. pneumophila (strain Philadelphia 1 / ATCC 33152 / DSM 7513) protein is DNA-directed RNA polymerase subunit alpha.